We begin with the raw amino-acid sequence, 690 residues long: Molting protein mlt-10 (690 aa).

A signal peptide spans 1 to 18 (MRNLNLILFTALAAVTYA). N-linked (GlcNAc...) asparagine glycosylation is found at Asn42 and Asn204. Residues 219–285 (IKKLGEEAKR…MRKKEADEIR (67 aa)) are a coiled coil. 2 N-linked (GlcNAc...) asparagine glycosylation sites follow: Asn305 and Asn415. The next 5 helical transmembrane spans lie at 514–534 (PFIL…FIVL), 544–564 (LSPA…PLIL), 579–599 (FSPI…PGVF), 618–638 (VFTP…TPMV), and 643–663 (ILSP…FAVV).

Belongs to the mlt-10-like family. As to expression, expressed in the major body hypodermal syncytium (Hyp7), the dorsal and ventral ridges of the hypodermis, hypodermal cells in the head and tail, and the pharyngeal myoepithelium, but not the lateral seam cells.

The protein localises to the membrane. It localises to the secreted. Its function is as follows. Required for the efficient removal of larval cuticles during the molting cycle as well as the synthesis of new cuticles. The sequence is that of Molting protein mlt-10 from Caenorhabditis elegans.